Consider the following 473-residue polypeptide: 3-isopropylmalate dehydratase large subunit (473 aa).

[4Fe-4S] cluster contacts are provided by C351, C414, and C417.

The protein belongs to the aconitase/IPM isomerase family. LeuC type 1 subfamily. As to quaternary structure, heterodimer of LeuC and LeuD. The cofactor is [4Fe-4S] cluster.

The enzyme catalyses (2R,3S)-3-isopropylmalate = (2S)-2-isopropylmalate. It functions in the pathway amino-acid biosynthesis; L-leucine biosynthesis; L-leucine from 3-methyl-2-oxobutanoate: step 2/4. Functionally, catalyzes the isomerization between 2-isopropylmalate and 3-isopropylmalate, via the formation of 2-isopropylmaleate. This is 3-isopropylmalate dehydratase large subunit from Variovorax paradoxus (strain S110).